A 782-amino-acid polypeptide reads, in one-letter code: Large T antigen (782 aa).

Position 1 is an N-acetylmethionine; by host (Met1). The J domain maps to 12 to 75 (RLLELLKLPR…VYNLRMNLGG (64 aa)). Disordered regions lie at residues 74-97 (GGTGFQGSPPRTAERGTEESGHSP) and 145-291 (YEEP…APSD). Over residues 85–97 (TAERGTEESGHSP) the composition is skewed to basic and acidic residues. An LXCXE motif motif is present at residues 142 to 146 (LFCYE). A compositionally biased stretch (low complexity) spans 148–161 (PLLSPNPSSPTDTP). A compositionally biased stretch (gly residues) spans 199–209 (ATGGGGGGVHA). 2 stretches are compositionally biased toward low complexity: residues 233-247 (SQGGSESMGGSDSSG) and 264-274 (ESYSQSCSQSS). Thr278 carries the phosphothreonine; by host modification. Positions 279-286 (PPKKARED) match the Nuclear localization signal motif. The segment at residues 293–407 (PSSLTGYLSH…TENKPGLHQF (115 aa)) is a DNA-binding region (T-ag OBD). Residues 416–510 (QKAVDWIMVA…RRLKLVECTR (95 aa)) form a T-ag D1-type zinc finger. The Zn(2+) site is built by Cys453, Cys456, His466, and His470. In terms of domain architecture, SF3 helicase spans 549–709 (DFPQTLFKML…PHLAQSLEKC (161 aa)). Position 575 to 582 (575 to 582 (GPVNSGKT)) interacts with ATP.

In terms of assembly, forms homohexamers in the presence of ATP. Interacts with host HDAC1. Interacts (via LXCXE domain) with host RB1; the interaction induces the aberrant dissociation of RB1-E2F1 complex thereby disrupting RB1's activity. Interacts (via LXCXE domain) with host pRB-related proteins RBL1 and RBL2. Interacts (via C-terminus) with host TOP1 and POLA1 allowing DNA replication. Interacts with host preinitiation complex components TBP, TFIIA and TFIID to regulate transcription initiation. The cofactor is Mg(2+). Phosphorylated on both serine and threonine residues. Small t antigen inhibits the dephosphorylation by the AC form of PP2A. In terms of processing, O-Glycosylated near the C-terminal region. Post-translationally, acetylated by CBP in a TP53-dependent manner.

It is found in the host nucleus. It catalyses the reaction Couples ATP hydrolysis with the unwinding of duplex DNA by translocating in the 3'-5' direction.. The catalysed reaction is ATP + H2O = ADP + phosphate + H(+). In terms of biological role, isoform large T antigen is a key early protein essential for both driving viral replication and inducing cellular transformation. Plays a role in viral genome replication by driving entry of quiescent cells into the cell cycle and by autoregulating the synthesis of viral early mRNA. Displays highly oncogenic activities by corrupting the host cellular checkpoint mechanisms that guard cell division and the transcription, replication, and repair of DNA. Participates in the modulation of cellular gene expression preceeding viral DNA replication. This step involves binding to host key cell cycle regulators retinoblastoma protein RB1/pRb and TP53. Induces the disassembly of host E2F1 transcription factors from RB1, thus promoting transcriptional activation of E2F1-regulated S-phase genes. Inhibits host TP53 binding to DNA, abrogating the ability of TP53 to stimulate gene expression. Plays the role of a TFIID-associated factor (TAF) in transcription initiation for all three RNA polymerases, by stabilizing the TBP-TFIIA complex on promoters. Initiates viral DNA replication and unwinding via interactions with the viral origin of replication. Binds two adjacent sites in the SV40 origin. The replication fork movement is facilitated by Large T antigen helicase activity. Has processive 3'-5' DNA helicase activity which requires a short 3' single-stranded region and ATP. Activates the transcription of viral late mRNA, through host TBP and TFIIA stabilization. Interferes with histone deacetylation mediated by HDAC1, leading to activation of transcription. The chain is Large T antigen from Mus musculus (Mouse).